Consider the following 993-residue polypeptide: DNA double-strand break repair Rad50 ATPase (993 aa).

ATP is bound by residues Arg12, 32-38, and Gln133; that span reads NGSGKSS. Coiled coils occupy residues 192-222 and 402-493; these read LENLEKLKNEVSESEILKEEILKKYENLEKL and EELK…LEKT. The 105-residue stretch at 452 to 556 folds into the Zinc-hook domain; the sequence is ENELKEKYED…KLNEIDSFKL (105 aa). Residues Cys497 and Cys500 each coordinate Zn(2+). 3 coiled-coil regions span residues 570–612, 646–677, and 702–731; these read KVEE…LEND, DSSKIENEKKSLENLKDELKNTIYNLEREINL, and ETEKSDFENKLSECKENYEKYMESLAVLKN.

It belongs to the SMC family. RAD50 subfamily. As to quaternary structure, homodimer. Forms a heterotetramer composed of two Mre11 subunits and two Rad50 subunits. Requires Zn(2+) as cofactor.

Part of the Rad50/Mre11 complex, which is involved in the early steps of DNA double-strand break (DSB) repair. The complex may facilitate opening of the processed DNA ends to aid in the recruitment of HerA and NurA. Rad50 controls the balance between DNA end bridging and DNA resection via ATP-dependent structural rearrangements of the Rad50/Mre11 complex. This Methanococcus maripaludis (strain DSM 14266 / JCM 13030 / NBRC 101832 / S2 / LL) protein is DNA double-strand break repair Rad50 ATPase.